Reading from the N-terminus, the 309-residue chain is MSDVLISEFMDEAAVADLERDCSVTFDATLVDDRARLLSSGAGVRALIVRNRTRVDRELLARFPDLRAVGRLGVGLDNIDVDACRESDIAVLPATGGNTVSVAEYVLTGIFMLRRGAYLSTPRVLAGEWPRQALMGHETQGATLGLVGFGGIARDLARRAQCLGMQVMAHDPFVPADDAAWQTVERAERLATLLEKADAVSLHVPLSEGTRHLIDGEALATMKPGSLLINTARGGIVDERALAASLRDRHLGGAMLDVFEEEPLTADSVLSGVEGLIATPHIAGVTHESNERISWITVDNVRRALGVRA.

Residues 151–152 (GI), D171, 231–233 (TAR), and D257 each bind NAD(+). R233 is a catalytic residue. E262 is a catalytic residue. H281 (proton donor) is an active-site residue. An NAD(+)-binding site is contributed by 281 to 284 (HIAG).

The protein belongs to the D-isomer specific 2-hydroxyacid dehydrogenase family.

The catalysed reaction is (2S)-3-sulfolactate + NAD(+) = 3-sulfopyruvate + NADH + H(+). In terms of biological role, dehydrogenase of the (R,S)-sulfolactate degradation pathway that only acts on the (S)-enantiomer of 3-sulfolactate. Together with ComC, provides a racemase system that converts (2S)-3-sulfolactate to (2R)-3-sulfolactate, which is degraded further by (2R)-sulfolactate sulfo-lyase. Specific for NAD. Also able to form sulfolactate from sulfopyruvate. This chain is (S)-sulfolactate dehydrogenase (slcC), found in Chromohalobacter salexigens (strain ATCC BAA-138 / DSM 3043 / CIP 106854 / NCIMB 13768 / 1H11).